The following is a 559-amino-acid chain: DnaJ homolog subfamily C member 11 (559 aa).

Ala-2 is modified (N-acetylalanine). The 69-residue stretch at 14–82 folds into the J domain; sequence DYYSLLNVRR…QTRAIYDIYG (69 aa). Position 204 is a phosphoserine (Ser-204). Residues 415-457 are a coiled coil; it reads QKEKELEKQRENTASDILQKKQEAEAAVRLMQESVRRIIEAEE.

Belongs to the DNAJC11 family. In terms of assembly, associates with the mitochondrial contact site and cristae organizing system (MICOS) complex, composed of at least MICOS10/MIC10, CHCHD3/MIC19, CHCHD6/MIC25, APOOL/MIC27, IMMT/MIC60, APOO/MIC23/MIC26 and QIL1/MIC13. This complex was also known under the names MINOS or MitOS complex. The MICOS complex associates with mitochondrial outer membrane proteins SAMM50, MTX1 and MTX2 (together described as components of the mitochondrial outer membrane sorting assembly machinery (SAM) complex) and DNAJC11, mitochondrial inner membrane protein TMEM11 and with HSPA9. The MICOS and SAM complexes together with DNAJC11 are part of a large protein complex spanning both membranes termed the mitochondrial intermembrane space bridging (MIB) complex.

The protein resides in the mitochondrion. Its subcellular location is the mitochondrion outer membrane. Required for mitochondrial inner membrane organization. Seems to function through its association with the MICOS complex and the mitochondrial outer membrane sorting assembly machinery (SAM) complex. This chain is DnaJ homolog subfamily C member 11 (Dnajc11), found in Mus musculus (Mouse).